Reading from the N-terminus, the 444-residue chain is Phosphoglucosamine mutase (444 aa).

Residue Ser101 is the Phosphoserine intermediate of the active site. 4 residues coordinate Mg(2+): Ser101, Asp240, Asp242, and Asp244. Residue Ser101 is modified to Phosphoserine.

The protein belongs to the phosphohexose mutase family. Mg(2+) is required as a cofactor. Post-translationally, activated by phosphorylation.

The enzyme catalyses alpha-D-glucosamine 1-phosphate = D-glucosamine 6-phosphate. Catalyzes the conversion of glucosamine-6-phosphate to glucosamine-1-phosphate. The sequence is that of Phosphoglucosamine mutase from Aeromonas salmonicida (strain A449).